Consider the following 79-residue polypeptide: Ferredoxin (79 aa).

4Fe-4S ferredoxin-type domains follow at residues 2-30 (PHVI…YDGG) and 31-60 (DQFY…PEED). Cys9 and Cys17 together coordinate [3Fe-4S] cluster. Positions 21, 40, 43, and 46 each coordinate [4Fe-4S] cluster. Cys50 lines the [3Fe-4S] cluster pocket.

[4Fe-4S] cluster is required as a cofactor. It depends on [3Fe-4S] cluster as a cofactor.

Ferredoxins are iron-sulfur proteins that transfer electrons in a wide variety of metabolic reactions. In Thermus thermophilus (strain ATCC 27634 / DSM 579 / HB8), this protein is Ferredoxin.